We begin with the raw amino-acid sequence, 1077 residues long: ATP-dependent helicase/deoxyribonuclease subunit B (1077 aa).

This sequence belongs to the helicase family. AddB/RexB type 2 subfamily. Heterodimer of AddA and RexB. Mg(2+) serves as cofactor.

Its function is as follows. The heterodimer acts as both an ATP-dependent DNA helicase and an ATP-dependent, dual-direction single-stranded exonuclease. Recognizes the chi site generating a DNA molecule suitable for the initiation of homologous recombination. This subunit has 5' -&gt; 3' nuclease activity but not helicase activity. The protein is ATP-dependent helicase/deoxyribonuclease subunit B of Streptococcus agalactiae serotype Ia (strain ATCC 27591 / A909 / CDC SS700).